The chain runs to 136 residues: Cytochrome c oxidase subunit 13, mitochondrial (136 aa).

The N-terminal 29 residues, 1 to 29 (MFAQRQMFFARLAANLRAPAVRQTVQRRF), are a transit peptide targeting the mitochondrion. The Mitochondrial matrix portion of the chain corresponds to 30–62 (ASTPANESGKNAFVREREAVKQHAAETTELWRK). Residues 63–83 (ISLYGIPPALALAGYNAYTLY) form a helical membrane-spanning segment. The Mitochondrial intermembrane portion of the chain corresponds to 84-136 (NEHWEHWSHLPPLEERTEYPYQNIRTRNYPWGDGDKTLFWNESVNYHNRDKVT).

It belongs to the cytochrome c oxidase subunit 6A family. As to quaternary structure, component of the cytochrome c oxidase (complex IV, CIV), a multisubunit enzyme composed of 11 subunits. The complex is composed of a catalytic core of 3 subunits Cox1, Cox2 and Cox3, encoded in the mitochondrial DNA, and 8 supernumerary subunits Cox4, Cox5a/Cox5, Cox6, Cox7, Cox8, Cox7a/Cox9, Cox6b/Cox12 and Cox6a/Cox13, which are encoded in the nuclear genome. The complex exists as a monomer or a dimer and forms respiratory supercomplexes (SCs) in the inner mitochondrial membrane with NADH-ubiquinone oxidoreductase (complex I, CI) and ubiquinol-cytochrome c oxidoreductase (cytochrome b-c1 complex, complex III, CIII), resulting in various different assemblies (supercomplexes I(1)IV(1), I(1)III(3)IV(2), III(2)IV(1) and III(2)IV(2) as well as larger supercomplexes of compositions like I(1)III(2)IV(5-6)). Cox6a/Cox13 was not present in the cryo-EM structure. It may be involved in complex IV dimer formation and might not be always expressed. This would explain its absence in the map of the isolated monomer.

It is found in the mitochondrion inner membrane. It functions in the pathway energy metabolism; oxidative phosphorylation. Component of the cytochrome c oxidase, the last enzyme in the mitochondrial electron transport chain which drives oxidative phosphorylation. The respiratory chain contains 3 multisubunit complexes succinate dehydrogenase (complex II, CII), ubiquinol-cytochrome c oxidoreductase (cytochrome b-c1 complex, complex III, CIII) and cytochrome c oxidase (complex IV, CIV), that cooperate to transfer electrons derived from NADH and succinate to molecular oxygen, creating an electrochemical gradient over the inner membrane that drives transmembrane transport and the ATP synthase. Cytochrome c oxidase is the component of the respiratory chain that catalyzes the reduction of oxygen to water. Electrons originating from reduced cytochrome c in the intermembrane space (IMS) are transferred via the dinuclear copper A center (CU(A)) of Cox2 and heme A of Cox1 to the active site in Cox1, a binuclear center (BNC) formed by heme A3 and copper B (CU(B)). The BNC reduces molecular oxygen to 2 water molecules using 4 electrons from cytochrome c in the IMS and 4 protons from the mitochondrial matrix. The chain is Cytochrome c oxidase subunit 13, mitochondrial (eat-5) from Neurospora crassa (strain ATCC 24698 / 74-OR23-1A / CBS 708.71 / DSM 1257 / FGSC 987).